Consider the following 177-residue polypeptide: Large ribosomal subunit protein uL6 (177 aa).

Belongs to the universal ribosomal protein uL6 family. Part of the 50S ribosomal subunit.

In terms of biological role, this protein binds to the 23S rRNA, and is important in its secondary structure. It is located near the subunit interface in the base of the L7/L12 stalk, and near the tRNA binding site of the peptidyltransferase center. The chain is Large ribosomal subunit protein uL6 from Shewanella amazonensis (strain ATCC BAA-1098 / SB2B).